The sequence spans 705 residues: Polyribonucleotide nucleotidyltransferase (705 aa).

Mg(2+) contacts are provided by Asp-487 and Asp-493. A KH domain is found at 554–613 (PKILTMTINPDKIRDVIGPSGKQINKIIEETGVKIDIEQDGTIFISSTDESGNQKAKKII). The 69-residue stretch at 623 to 691 (GQLYLGKVKR…KQGRVNLSRK (69 aa)) folds into the S1 motif domain.

It belongs to the polyribonucleotide nucleotidyltransferase family. As to quaternary structure, homodimer. Component of a possible RNA degradosome complex composed of rny, rnjA, rnjB, pnp, pfkA and eno (although rnjA and rnjB's presence is unclear). RNA helicase CshA may also be a member of this complex. Requires Mg(2+) as cofactor.

It is found in the cytoplasm. The catalysed reaction is RNA(n+1) + phosphate = RNA(n) + a ribonucleoside 5'-diphosphate. Involved in mRNA degradation. Catalyzes the phosphorolysis of single-stranded polyribonucleotides processively in the 3'- to 5'-direction. Necessary for competence development in Bacillus subtilis. May be necessary for modification of the srfA transcript (stabilization or translation activation). Involved in processing precursor type I toxin-antitoxin RNAs antitoxin SR4 and SR5 RNAs to their mature forms. This chain is Polyribonucleotide nucleotidyltransferase, found in Bacillus subtilis (strain 168).